A 662-amino-acid polypeptide reads, in one-letter code: Protein-arginine deiminase type-1 (662 aa).

Ca(2+) is bound by residues N153, D155, D157, D164, D175, D178, Q350, E352, K363, D370, S371, N374, F408, and L411. Catalysis depends on C644, which acts as the Nucleophile.

It belongs to the protein arginine deiminase family. In terms of assembly, monomer. It depends on Ca(2+) as a cofactor. As to expression, expressed only in the epidermis and uterus.

The protein localises to the cytoplasm. The enzyme catalyses L-arginyl-[protein] + H2O = L-citrullyl-[protein] + NH4(+). Its function is as follows. Catalyzes the deimination of arginine residues of proteins. This Mus musculus (Mouse) protein is Protein-arginine deiminase type-1 (Padi1).